The chain runs to 192 residues: Ion-translocating oxidoreductase complex subunit A (192 aa).

The next 6 helical transmembrane spans lie at isoleucine 5–leucine 25, isoleucine 39–isoleucine 59, isoleucine 63–valine 83, leucine 102–leucine 122, valine 134–leucine 154, and serine 171–valine 191.

The protein belongs to the NqrDE/RnfAE family. In terms of assembly, the complex is composed of six subunits: RnfA, RnfB, RnfC, RnfD, RnfE and RnfG.

The protein localises to the cell inner membrane. Part of a membrane-bound complex that couples electron transfer with translocation of ions across the membrane. The chain is Ion-translocating oxidoreductase complex subunit A from Pasteurella multocida (strain Pm70).